A 550-amino-acid chain; its full sequence is Leucine-rich repeat, immunoglobulin-like domain and transmembrane domain-containing protein 2 (550 aa).

Positions Met-1–Ala-19 are cleaved as a signal peptide. Positions Phe-23–Ser-54 constitute an LRRNT domain. N-linked (GlcNAc...) asparagine glycosylation occurs at Asn-52. LRR repeat units follow at residues Thr-80–Pro-103, Glu-104–Ala-125, Leu-128–Phe-149, and Ser-152–Asn-173. Positions Asn-200–Lys-252 constitute an LRRCT domain. The region spanning Pro-253–Ser-341 is the Ig-like domain. Cys-274 and Cys-327 are joined by a disulfide. Positions Glu-361–Gly-451 constitute a Fibronectin type-III domain. The chain crosses the membrane as a helical span at residues Val-466–Ala-486. Residues Ser-508–Ser-550 are disordered. The span at Gly-519–Ser-550 shows a compositional bias: basic and acidic residues.

In terms of assembly, interacts with LRIT1; may form a heterodimer with LRIT1.

The protein localises to the membrane. The chain is Leucine-rich repeat, immunoglobulin-like domain and transmembrane domain-containing protein 2 (LRIT2) from Homo sapiens (Human).